The sequence spans 1141 residues: Eukaryotic translation initiation factor 3 subunit A (1141 aa).

The region spanning 319 to 501 (LQRMAAHVLL…NSIYFGTDLT (183 aa)) is the PCI domain. Composition is skewed to basic and acidic residues over residues 588–623 (QNNAREEEEARRQEEESRKAKLAEQKRLEQEQEERE) and 829–899 (AAEE…RGGD). Disordered stretches follow at residues 588 to 631 (QNNA…QNEI) and 829 to 1141 (AAEE…VKRR). Ser-908 carries the post-translational modification Phosphoserine. Basic and acidic residues-rich tracts occupy residues 920 to 976 (ERND…EPDT), 990 to 1051 (SRDD…EPQR), 1059 to 1087 (DAPRHADRENRRPAGERRDRDVRETRGDQ), and 1110 to 1131 (TREEKPAAKRDQAQEKENKAGD).

It belongs to the eIF-3 subunit A family. As to quaternary structure, component of the eukaryotic translation initiation factor 3 (eIF-3) complex. The eIF-3 complex interacts with pix.

The protein resides in the cytoplasm. Functionally, RNA-binding component of the eukaryotic translation initiation factor 3 (eIF-3) complex, which is involved in protein synthesis of a specialized repertoire of mRNAs and, together with other initiation factors, stimulates binding of mRNA and methionyl-tRNAi to the 40S ribosome. The eIF-3 complex specifically targets and initiates translation of a subset of mRNAs involved in cell proliferation. The protein is Eukaryotic translation initiation factor 3 subunit A of Drosophila simulans (Fruit fly).